A 580-amino-acid chain; its full sequence is MIAPGPRATDHDTDVLVVGAGPVGLTLANILGLQGIRTVVVEERDTLIDYPRGVGLDDEALRTFQSIGLVERVLPHTVPNQILRFMDAKRRVLAEMAPPDARFGWPKRNGFVQPLVDAELLAGLDRFAHVQVRWGSPMTGCREDADGVNVELGADGGNVGDGGGDGHPAGLRARYVVGCDGGRSMTRRVMGVSFDGTTSSTRWLVVDIANDPLGHPNSEVGADPERPYASISIAHGIRRFEFMIHADESDEQAEDPEFLTRMLARMVPHPDRVDVIRRRVYTHHSRIAGEFRRGRLLLAGDAAHLMPVWQGQGYNSGIRDAANLGWKLAAVVSGRAGDKLLDTYDMERRKHARAMIDLSTMVGRVISPTNRRVAGARDLLVRSASIVPTLKRYVLEMRFKPMPRYEHGAVVHANPGRADSPVGTLFIQPRVDTRDQQDVLLDDVLGPWFAVLCWNNNPRKILGETAFANWKALGARFFALRPATQLRWTGHDDPDVVVVGDRRGDLKSWFDIHAESVLFLRPDRCIAGACIAQRAPDLSAALFDALTLTPRGGDPQSGTGSVLYVAQPAPESSGAVAGPA.

FAD contacts are provided by residues 14-43 (DVLV…VVEE) and 291-301 (FRRGRLLLAGD).

This sequence belongs to the PheA/TfdB FAD monooxygenase family. The cofactor is FAD.

It carries out the reaction 3-(3-hydroxyphenyl)propanoate + NADH + O2 + H(+) = 3-(2,3-dihydroxyphenyl)propanoate + NAD(+) + H2O. The catalysed reaction is (2E)-3-(3-hydroxyphenyl)prop-2-enoate + NADH + O2 + H(+) = (2E)-3-(2,3-dihydroxyphenyl)prop-2-enoate + NAD(+) + H2O. The protein operates within aromatic compound metabolism; 3-phenylpropanoate degradation. In terms of biological role, catalyzes the insertion of one atom of molecular oxygen into position 2 of the phenyl ring of 3-(3-hydroxyphenyl)propionate (3-HPP) and hydroxycinnamic acid (3HCI). This chain is 3-(3-hydroxy-phenyl)propionate/3-hydroxycinnamic acid hydroxylase, found in Mycobacterium avium (strain 104).